Consider the following 471-residue polypeptide: MSVLFLLLAITRTASVKAAEGDQAADFLPLCEAWQATKALANAAYKLPPFPPDLTDILNFNITVAPEEWKAIFTDGGSDNTWERFAEGHKNTLNGGNWKTRWEHIKQARQDTKEASSPWNALNSKLINTATVNTTRAYIASIADEAFDLYQGTQTPLQTPKALEAASLAEAAKAILCSDPLKPTADGQACTDITATPSKAATCPTGRSSKGGAPIGLDTVCLCSTNKPSMHSRRRKAAAVMTDGQLKDGILKKLLAACPKKPTLNEPAAAARHAVTVLATRLAQKVARAEEGQIILGTRAETDCASSGSACVEYTNFFKDGDGLAAVPWVKKLLAAADFYDTIEKRKESDKNAATAIAALKSALIREFRRPGQEQTLATTGTKSSSPQSTQQKASEAEANCNDKAKETECNSPCKWDKEEKDEKKRCKLSEEGKQAEKENQEGKDGKANTTGSSNSFVIKTSPLLLAVLLL.

Residues 1–18 (MSVLFLLLAITRTASVKA) form the signal peptide. 2 N-linked (GlcNAc...) asparagine glycosylation sites follow: Asn-61 and Asn-133. Positions 373–457 (QEQTLATTGT…ANTTGSSNSF (85 aa)) are disordered. Residues 379-392 (TTGTKSSSPQSTQQ) are compositionally biased toward low complexity. 2 disulfides stabilise this stretch: Cys-401–Cys-414 and Cys-410–Cys-427. Positions 401–447 (CNDKAKETECNSPCKWDKEEKDEKKRCKLSEEGKQAEKENQEGKDGK) are enriched in basic and acidic residues. The span at 448-457 (ANTTGSSNSF) shows a compositional bias: polar residues. Residue Asn-449 is glycosylated (N-linked (GlcNAc...) asparagine). The GPI-anchor amidated serine moiety is linked to residue Ser-454. A propeptide spans 455 to 471 (NSFVIKTSPLLLAVLLL) (removed in mature form).

Its subcellular location is the cell membrane. Functionally, VSG forms a coat on the surface of the parasite. The trypanosome evades the immune response of the host by expressing a series of antigenically distinct VSGs from an estimated 1000 VSG genes. This is Variant surface glycoprotein WRATAT A from Trypanosoma brucei rhodesiense.